A 296-amino-acid chain; its full sequence is tRNA dimethylallyltransferase (296 aa).

2-9 (GPTASGKT) lines the ATP pocket. 4–9 (TASGKT) lines the substrate pocket. Interaction with substrate tRNA regions lie at residues 27–30 (DSAL), 151–155 (QRLAR), and 232–237 (RCVGYR).

It belongs to the IPP transferase family. In terms of assembly, monomer. Mg(2+) serves as cofactor.

The catalysed reaction is adenosine(37) in tRNA + dimethylallyl diphosphate = N(6)-dimethylallyladenosine(37) in tRNA + diphosphate. In terms of biological role, catalyzes the transfer of a dimethylallyl group onto the adenine at position 37 in tRNAs that read codons beginning with uridine, leading to the formation of N6-(dimethylallyl)adenosine (i(6)A). This chain is tRNA dimethylallyltransferase, found in Shewanella pealeana (strain ATCC 700345 / ANG-SQ1).